The following is a 301-amino-acid chain: Mycothiol acetyltransferase (301 aa).

2 consecutive N-acetyltransferase domains span residues Glu6 to Asp151 and Val153 to Arg301. Leu79–Val81 lines the acetyl-CoA pocket. Residues Glu180, Lys219, and Glu235 each coordinate 1D-myo-inositol 2-(L-cysteinylamino)-2-deoxy-alpha-D-glucopyranoside. Acetyl-CoA-binding positions include Val239–Val241 and Gln246–Arg252. Tyr273 provides a ligand contact to 1D-myo-inositol 2-(L-cysteinylamino)-2-deoxy-alpha-D-glucopyranoside.

It belongs to the acetyltransferase family. MshD subfamily. Monomer.

The enzyme catalyses 1D-myo-inositol 2-(L-cysteinylamino)-2-deoxy-alpha-D-glucopyranoside + acetyl-CoA = mycothiol + CoA + H(+). Catalyzes the transfer of acetyl from acetyl-CoA to desacetylmycothiol (Cys-GlcN-Ins) to form mycothiol. The sequence is that of Mycothiol acetyltransferase from Amycolatopsis mediterranei (strain U-32).